A 64-amino-acid chain; its full sequence is Large ribosomal subunit protein bL32 (64 aa).

Residues 1–15 (MAVPKRKVSKSRRDS) are compositionally biased toward basic residues. The segment at 1-21 (MAVPKRKVSKSRRDSRRAQTF) is disordered.

The protein belongs to the bacterial ribosomal protein bL32 family.

This Symbiobacterium thermophilum (strain DSM 24528 / JCM 14929 / IAM 14863 / T) protein is Large ribosomal subunit protein bL32.